We begin with the raw amino-acid sequence, 336 residues long: Ornithine carbamoyltransferase, catabolic (336 aa).

Carbamoyl phosphate-binding positions include 57-60, Gln84, Arg108, and 136-139; these read STRT and HPTQ. Residues Asn169, Asp233, and 237–238 each bind L-ornithine; that span reads SM. Carbamoyl phosphate contacts are provided by residues 275–276 and Arg322; that span reads CL.

The protein belongs to the aspartate/ornithine carbamoyltransferase superfamily. OTCase family.

It localises to the cytoplasm. It carries out the reaction carbamoyl phosphate + L-ornithine = L-citrulline + phosphate + H(+). It functions in the pathway amino-acid degradation; L-arginine degradation via ADI pathway; carbamoyl phosphate from L-arginine: step 2/2. Its function is as follows. Reversibly catalyzes the transfer of the carbamoyl group from carbamoyl phosphate (CP) to the N(epsilon) atom of ornithine (ORN) to produce L-citrulline. This chain is Ornithine carbamoyltransferase, catabolic, found in Chromobacterium violaceum (strain ATCC 12472 / DSM 30191 / JCM 1249 / CCUG 213 / NBRC 12614 / NCIMB 9131 / NCTC 9757 / MK).